The chain runs to 216 residues: ATP-dependent dethiobiotin synthetase BioD (216 aa).

Residue 12–17 (GVGKSY) coordinates ATP. S16 is a Mg(2+) binding site. Residue K37 is part of the active site. T41 is a binding site for substrate. Mg(2+)-binding residues include H53 and E115. Residue 115-118 (EGAG) participates in ATP binding.

The protein belongs to the dethiobiotin synthetase family. As to quaternary structure, homodimer. Mg(2+) serves as cofactor.

The protein resides in the cytoplasm. It catalyses the reaction (7R,8S)-7,8-diammoniononanoate + CO2 + ATP = (4R,5S)-dethiobiotin + ADP + phosphate + 3 H(+). It functions in the pathway cofactor biosynthesis; biotin biosynthesis; biotin from 7,8-diaminononanoate: step 1/2. In terms of biological role, catalyzes a mechanistically unusual reaction, the ATP-dependent insertion of CO2 between the N7 and N8 nitrogen atoms of 7,8-diaminopelargonic acid (DAPA, also called 7,8-diammoniononanoate) to form a ureido ring. This chain is ATP-dependent dethiobiotin synthetase BioD, found in Wolinella succinogenes (strain ATCC 29543 / DSM 1740 / CCUG 13145 / JCM 31913 / LMG 7466 / NCTC 11488 / FDC 602W) (Vibrio succinogenes).